The following is a 393-amino-acid chain: Putative zinc metalloprotease Rip3 (393 aa).

2 consecutive transmembrane segments (helical) span residues 10–30 (IAGFVVNVHWSVLVILWLFTW) and 45–65 (AVVYWLLGAGGAVMLLASLLA). Position 66 (His-66) interacts with Zn(2+). Glu-67 is a catalytic residue. His-70 is a Zn(2+) binding site. 4 helical membrane passes run 77–97 (AGVSVESVTLWLFGGVTALGG), 108–128 (IAFAGPATSLALSATFGALAI), 136–156 (PAIVISVAWWLATVNLLLGLF), and 207–227 (FVAGGLVGGVWLAFIGWFIFA). 2 consecutive CBS domains span residues 251–308 (MTAQ…RRST) and 315–376 (ALPL…AQPE).

The protein belongs to the peptidase M50B family. Zn(2+) serves as cofactor.

Its subcellular location is the cell membrane. The polypeptide is Putative zinc metalloprotease Rip3 (rip3) (Mycobacterium tuberculosis (strain ATCC 35801 / TMC 107 / Erdman)).